The sequence spans 162 residues: Phosphopantetheine adenylyltransferase (162 aa).

Residue S9 participates in substrate binding. ATP contacts are provided by residues 9 to 10 and H17; that span reads SF. Substrate-binding residues include K41, L73, and K87. ATP contacts are provided by residues 88–90, E98, and 122–128; these read GLR and YSFLSSS.

Belongs to the bacterial CoaD family. As to quaternary structure, homohexamer. The cofactor is Mg(2+).

Its subcellular location is the cytoplasm. The catalysed reaction is (R)-4'-phosphopantetheine + ATP + H(+) = 3'-dephospho-CoA + diphosphate. Its pathway is cofactor biosynthesis; coenzyme A biosynthesis; CoA from (R)-pantothenate: step 4/5. Reversibly transfers an adenylyl group from ATP to 4'-phosphopantetheine, yielding dephospho-CoA (dPCoA) and pyrophosphate. The protein is Phosphopantetheine adenylyltransferase of Salinispora tropica (strain ATCC BAA-916 / DSM 44818 / JCM 13857 / NBRC 105044 / CNB-440).